The chain runs to 481 residues: Tryptophan biosynthesis protein TrpCF (481 aa).

Residues 1–283 form an indole-3-glycerol phosphate synthase region; the sequence is MKMTDFNTQQ…LAVRKVTLGE (283 aa). An N-(5'-phosphoribosyl)anthranilate isomerase region spans residues 284-481; the sequence is NKVCGLTHPD…QAAFHAIRNY (198 aa).

The protein in the N-terminal section; belongs to the TrpC family. In the C-terminal section; belongs to the TrpF family. As to quaternary structure, monomer.

The catalysed reaction is N-(5-phospho-beta-D-ribosyl)anthranilate = 1-(2-carboxyphenylamino)-1-deoxy-D-ribulose 5-phosphate. The enzyme catalyses 1-(2-carboxyphenylamino)-1-deoxy-D-ribulose 5-phosphate + H(+) = (1S,2R)-1-C-(indol-3-yl)glycerol 3-phosphate + CO2 + H2O. The protein operates within amino-acid biosynthesis; L-tryptophan biosynthesis; L-tryptophan from chorismate: step 3/5. Its pathway is amino-acid biosynthesis; L-tryptophan biosynthesis; L-tryptophan from chorismate: step 4/5. In terms of biological role, bifunctional enzyme that catalyzes two sequential steps of tryptophan biosynthetic pathway. The first reaction is catalyzed by the isomerase, coded by the TrpF domain; the second reaction is catalyzed by the synthase, coded by the TrpC domain. This Vibrio parahaemolyticus serotype O3:K6 (strain RIMD 2210633) protein is Tryptophan biosynthesis protein TrpCF (trpC).